The primary structure comprises 123 residues: Large ribosomal subunit protein bL12 (123 aa).

This sequence belongs to the bacterial ribosomal protein bL12 family. In terms of assembly, homodimer. Part of the ribosomal stalk of the 50S ribosomal subunit. Forms a multimeric L10(L12)X complex, where L10 forms an elongated spine to which 2 to 4 L12 dimers bind in a sequential fashion. Binds GTP-bound translation factors.

Its function is as follows. Forms part of the ribosomal stalk which helps the ribosome interact with GTP-bound translation factors. Is thus essential for accurate translation. This is Large ribosomal subunit protein bL12 from Burkholderia vietnamiensis (strain G4 / LMG 22486) (Burkholderia cepacia (strain R1808)).